The following is a 284-amino-acid chain: 4-hydroxybenzoate octaprenyltransferase (284 aa).

The next 8 membrane-spanning stretches (helical) occupy residues 16–36, 40–60, 91–111, 132–152, 157–177, 206–226, 231–251, and 259–279; these read PIGI…ASDG, WTLL…GCAI, LLVA…LNTL, FFAI…PMGF, NTVP…AVAY, VAAV…VGWQ, TWFA…YTLI, and CFAA…GVVL.

The protein belongs to the UbiA prenyltransferase family. The cofactor is Mg(2+).

It localises to the cell inner membrane. It carries out the reaction all-trans-octaprenyl diphosphate + 4-hydroxybenzoate = 4-hydroxy-3-(all-trans-octaprenyl)benzoate + diphosphate. It participates in cofactor biosynthesis; ubiquinone biosynthesis. In terms of biological role, catalyzes the prenylation of para-hydroxybenzoate (PHB) with an all-trans polyprenyl group. Mediates the second step in the final reaction sequence of ubiquinone-8 (UQ-8) biosynthesis, which is the condensation of the polyisoprenoid side chain with PHB, generating the first membrane-bound Q intermediate 3-octaprenyl-4-hydroxybenzoate. This chain is 4-hydroxybenzoate octaprenyltransferase, found in Herminiimonas arsenicoxydans.